The primary structure comprises 223 residues: Triosephosphate isomerase (223 aa).

A substrate-binding site is contributed by 6 to 8; it reads NLK. Histidine 86 acts as the Electrophile in catalysis. Catalysis depends on glutamate 151, which acts as the Proton acceptor. The substrate site is built by glycine 157 and serine 187.

This sequence belongs to the triosephosphate isomerase family. In terms of assembly, homodimer.

It localises to the cytoplasm. It catalyses the reaction D-glyceraldehyde 3-phosphate = dihydroxyacetone phosphate. It participates in carbohydrate biosynthesis; gluconeogenesis. The protein operates within carbohydrate degradation; glycolysis; D-glyceraldehyde 3-phosphate from glycerone phosphate: step 1/1. Functionally, involved in the gluconeogenesis. Catalyzes stereospecifically the conversion of dihydroxyacetone phosphate (DHAP) to D-glyceraldehyde-3-phosphate (G3P). This Campylobacter jejuni subsp. doylei (strain ATCC BAA-1458 / RM4099 / 269.97) protein is Triosephosphate isomerase.